The following is a 76-amino-acid chain: Cytochrome c oxidase subunit 6C-1 (76 aa).

Topologically, residues 2-10 are mitochondrial matrix; sequence SLAKPAMRG. The chain crosses the membrane as a helical span at residues 11–51; sequence LLGKRLRFHLPIAFTLSLVAALGFKYGVTEPRKQAYADFYK. At 52–76 the chain is on the mitochondrial intermembrane side; the sequence is QYDAVKDFNAMREAGIFESVRPSGE.

The protein belongs to the cytochrome c oxidase subunit 6c family. In terms of assembly, component of the cytochrome c oxidase (complex IV, CIV), a multisubunit enzyme composed of 14 subunits. The complex is composed of a catalytic core of 3 subunits MT-CO1, MT-CO2 and MT-CO3, encoded in the mitochondrial DNA, and 11 supernumerary subunits COX4I, COX5A, COX5B, COX6A, COX6B, COX6C, COX7A, COX7B, COX7C, COX8 and NDUFA4, which are encoded in the nuclear genome. The complex exists as a monomer or a dimer and forms supercomplexes (SCs) in the inner mitochondrial membrane with NADH-ubiquinone oxidoreductase (complex I, CI) and ubiquinol-cytochrome c oxidoreductase (cytochrome b-c1 complex, complex III, CIII), resulting in different assemblies (supercomplex SCI(1)III(2)IV(1) and megacomplex MCI(2)III(2)IV(2)).

It is found in the mitochondrion inner membrane. It functions in the pathway energy metabolism; oxidative phosphorylation. Component of the cytochrome c oxidase, the last enzyme in the mitochondrial electron transport chain which drives oxidative phosphorylation. The respiratory chain contains 3 multisubunit complexes succinate dehydrogenase (complex II, CII), ubiquinol-cytochrome c oxidoreductase (cytochrome b-c1 complex, complex III, CIII) and cytochrome c oxidase (complex IV, CIV), that cooperate to transfer electrons derived from NADH and succinate to molecular oxygen, creating an electrochemical gradient over the inner membrane that drives transmembrane transport and the ATP synthase. Cytochrome c oxidase is the component of the respiratory chain that catalyzes the reduction of oxygen to water. Electrons originating from reduced cytochrome c in the intermembrane space (IMS) are transferred via the dinuclear copper A center (CU(A)) of subunit 2 and heme A of subunit 1 to the active site in subunit 1, a binuclear center (BNC) formed by heme A3 and copper B (CU(B)). The BNC reduces molecular oxygen to 2 water molecules using 4 electrons from cytochrome c in the IMS and 4 protons from the mitochondrial matrix. The protein is Cytochrome c oxidase subunit 6C-1 of Thunnus obesus (Bigeye tuna).